The following is a 152-amino-acid chain: Aspartate carbamoyltransferase regulatory chain (152 aa).

Residues cysteine 108, cysteine 113, cysteine 137, and cysteine 140 each contribute to the Zn(2+) site.

Belongs to the PyrI family. Contains catalytic and regulatory chains. Requires Zn(2+) as cofactor.

Its function is as follows. Involved in allosteric regulation of aspartate carbamoyltransferase. The chain is Aspartate carbamoyltransferase regulatory chain from Neisseria gonorrhoeae (strain ATCC 700825 / FA 1090).